Here is a 260-residue protein sequence, read N- to C-terminus: Cytosolic Fe-S cluster assembly factor Nubp2 homolog (260 aa).

Residue 14–21 (GKGGVGKS) coordinates ATP. [4Fe-4S] cluster-binding residues include C188 and C191.

It belongs to the Mrp/NBP35 ATP-binding proteins family. NUBP2/CFD1 subfamily. Heterotetramer of 2 Nubp1 and 2 Nubp2 chains. Requires [4Fe-4S] cluster as cofactor.

It is found in the cytoplasm. Its function is as follows. Component of the cytosolic iron-sulfur (Fe/S) protein assembly (CIA) machinery. Required for maturation of extramitochondrial Fe-S proteins. The Nubp1-Nubp2 heterotetramer forms a Fe-S scaffold complex, mediating the de novo assembly of an Fe-S cluster and its transfer to target apoproteins. The protein is Cytosolic Fe-S cluster assembly factor Nubp2 homolog of Drosophila simulans (Fruit fly).